The primary structure comprises 62 residues: Photosystem II reaction center protein Z (62 aa).

2 helical membrane passes run 8 to 28 (AVFA…VVLA) and 41 to 61 (FSGA…NSFI).

This sequence belongs to the PsbZ family. As to quaternary structure, PSII is composed of 1 copy each of membrane proteins PsbA, PsbB, PsbC, PsbD, PsbE, PsbF, PsbH, PsbI, PsbJ, PsbK, PsbL, PsbM, PsbT, PsbY, PsbZ, Psb30/Ycf12, at least 3 peripheral proteins of the oxygen-evolving complex and a large number of cofactors. It forms dimeric complexes.

Its subcellular location is the plastid. It localises to the chloroplast thylakoid membrane. Functionally, may control the interaction of photosystem II (PSII) cores with the light-harvesting antenna, regulates electron flow through the 2 photosystem reaction centers. PSII is a light-driven water plastoquinone oxidoreductase, using light energy to abstract electrons from H(2)O, generating a proton gradient subsequently used for ATP formation. This chain is Photosystem II reaction center protein Z, found in Anthoceros angustus (Hornwort).